Here is a 539-residue protein sequence, read N- to C-terminus: Phosphoenolpyruvate carboxykinase (ATP) (539 aa).

Substrate-binding residues include Arg64, Tyr206, and Lys212. Residues Lys212, His231, and 247 to 255 (GLSGTGKTT) each bind ATP. Mn(2+)-binding residues include Lys212 and His231. Position 268 (Asp268) interacts with Mn(2+). ATP-binding positions include Glu296, Arg332, 448-449 (RI), and Thr454. Substrate is bound at residue Arg332.

The protein belongs to the phosphoenolpyruvate carboxykinase (ATP) family. Monomer. It depends on Mn(2+) as a cofactor.

Its subcellular location is the cytoplasm. It catalyses the reaction oxaloacetate + ATP = phosphoenolpyruvate + ADP + CO2. The protein operates within carbohydrate biosynthesis; gluconeogenesis. Its function is as follows. Involved in the gluconeogenesis. Catalyzes the conversion of oxaloacetate (OAA) to phosphoenolpyruvate (PEP) through direct phosphoryl transfer between the nucleoside triphosphate and OAA. The polypeptide is Phosphoenolpyruvate carboxykinase (ATP) (Yersinia pseudotuberculosis serotype IB (strain PB1/+)).